A 400-amino-acid chain; its full sequence is Tryptophan synthase beta chain (400 aa).

At Lys92 the chain carries N6-(pyridoxal phosphate)lysine.

Belongs to the TrpB family. As to quaternary structure, tetramer of two alpha and two beta chains. Pyridoxal 5'-phosphate is required as a cofactor.

The enzyme catalyses (1S,2R)-1-C-(indol-3-yl)glycerol 3-phosphate + L-serine = D-glyceraldehyde 3-phosphate + L-tryptophan + H2O. Its pathway is amino-acid biosynthesis; L-tryptophan biosynthesis; L-tryptophan from chorismate: step 5/5. Its function is as follows. The beta subunit is responsible for the synthesis of L-tryptophan from indole and L-serine. This chain is Tryptophan synthase beta chain, found in Neisseria meningitidis serogroup B (strain ATCC BAA-335 / MC58).